Consider the following 332-residue polypeptide: tRNA dimethylallyltransferase (332 aa).

14-21 (GPTASGKT) is an ATP binding site. Residue 16–21 (TASGKT) coordinates substrate. The segment at 39–42 (DSMQ) is interaction with substrate tRNA. Residues 312 to 332 (NKRSSNHDCKRKHPRPSTREL) are disordered. Residues 320–332 (CKRKHPRPSTREL) show a composition bias toward basic residues.

This sequence belongs to the IPP transferase family. In terms of assembly, monomer. Mg(2+) is required as a cofactor.

It carries out the reaction adenosine(37) in tRNA + dimethylallyl diphosphate = N(6)-dimethylallyladenosine(37) in tRNA + diphosphate. In terms of biological role, catalyzes the transfer of a dimethylallyl group onto the adenine at position 37 in tRNAs that read codons beginning with uridine, leading to the formation of N6-(dimethylallyl)adenosine (i(6)A). The chain is tRNA dimethylallyltransferase from Staphylococcus epidermidis (strain ATCC 35984 / DSM 28319 / BCRC 17069 / CCUG 31568 / BM 3577 / RP62A).